The sequence spans 216 residues: GTP cyclohydrolase 1 (216 aa).

Zn(2+) is bound by residues Cys109, His112, and Cys180.

The protein belongs to the GTP cyclohydrolase I family. Homomer.

It catalyses the reaction GTP + H2O = 7,8-dihydroneopterin 3'-triphosphate + formate + H(+). It participates in cofactor biosynthesis; 7,8-dihydroneopterin triphosphate biosynthesis; 7,8-dihydroneopterin triphosphate from GTP: step 1/1. This is GTP cyclohydrolase 1 from Tolumonas auensis (strain DSM 9187 / NBRC 110442 / TA 4).